A 417-amino-acid polypeptide reads, in one-letter code: Monooxygenase cfoF (417 aa).

FAD-binding positions include 45–48, R126, and D327; that span reads DRDK. Over residues 389–399 the composition is skewed to basic and acidic residues; the sequence is AHTTQLDRDQF. Residues 389 to 417 are disordered; sequence AHTTQLDRDQFTDGSGANDFLVGQQHSDK.

Belongs to the aromatic-ring hydroxylase family. KMO subfamily. It depends on FAD as a cofactor.

Its pathway is secondary metabolite biosynthesis; flavonoid biosynthesis. Monooxygenase; part of the gene cluster that mediates the biosynthesis of chlorflavonin, a fungal flavonoid with acetolactate synthase inhibitory activity. Within the pathway, cfoF is responsible for the hydroxylation of the flavonoid skeleton at position C3. The pathway begins with the PKS-NRPS hybrid synthetase cfoA that uses benzoic acid or p-hydroxybenzoic acid as a starter unit with four rounds of chain elongation using malonyl-CoA to form the chalcone skeleton. Then, a new type of chalcone isomerase, cfoK, catalyzes the conversion of the chalcone into a flavanone by a histidine-mediated oxa-Michael addition mechanism. The desaturation of flavanone to flavone is catalyzed by a new type of flavone synthase, the flavin mononucleotide (FMN)-dependent oxidoreductase cfoJ. Monooxygenases cfoF, cfoG, and P450 cfoH are responsible for the hydroxylation of the flavonoid skeleton at sites C3, C8, and C2', respectively. Like cfoF, the dehydratase cfoI plays also a role in the hydroxylation of position C3. Methyltransferases cfoB, cfoC, and cfoD then catalyze the methylation of C7-OH, C8-OH, and C3-OH, respectively. Finally, the monooxygenase cfoE is responsible for the chlorination of flavonoid at position C3'. This chain is Monooxygenase cfoF, found in Aspergillus candidus.